A 734-amino-acid polypeptide reads, in one-letter code: Photosystem I P700 chlorophyll a apoprotein A2 (734 aa).

8 consecutive transmembrane segments (helical) span residues 46 to 69 (IFAS…FHVA), 135 to 158 (LYTG…LHLQ), 175 to 199 (LNHH…HVAI), 273 to 291 (MAHH…GHMY), 330 to 353 (LHFQ…QHMY), 369 to 395 (AALY…IFFI), 417 to 439 (AIIS…LYVH), and 517 to 535 (FLVH…LILV). Cys-559 and Cys-568 together coordinate [4Fe-4S] cluster. 2 helical membrane passes run 575 to 596 (AFYL…YWHW) and 643 to 665 (LSVW…MFLI). Chlorophyll a is bound by residues His-654, Met-662, and Tyr-670. A phylloquinone-binding site is contributed by Trp-671. The chain crosses the membrane as a helical span at residues 707 to 727 (LVGLAHFSVGYIFTYAAFLIA).

This sequence belongs to the PsaA/PsaB family. The PsaA/B heterodimer binds the P700 chlorophyll special pair and subsequent electron acceptors. PSI consists of a core antenna complex that captures photons, and an electron transfer chain that converts photonic excitation into a charge separation. The eukaryotic PSI reaction center is composed of at least 11 subunits. It depends on P700 is a chlorophyll a/chlorophyll a' dimer, A0 is one or more chlorophyll a, A1 is one or both phylloquinones and FX is a shared 4Fe-4S iron-sulfur center. as a cofactor.

It localises to the plastid. The protein resides in the chloroplast thylakoid membrane. It carries out the reaction reduced [plastocyanin] + hnu + oxidized [2Fe-2S]-[ferredoxin] = oxidized [plastocyanin] + reduced [2Fe-2S]-[ferredoxin]. Functionally, psaA and PsaB bind P700, the primary electron donor of photosystem I (PSI), as well as the electron acceptors A0, A1 and FX. PSI is a plastocyanin-ferredoxin oxidoreductase, converting photonic excitation into a charge separation, which transfers an electron from the donor P700 chlorophyll pair to the spectroscopically characterized acceptors A0, A1, FX, FA and FB in turn. Oxidized P700 is reduced on the lumenal side of the thylakoid membrane by plastocyanin. The chain is Photosystem I P700 chlorophyll a apoprotein A2 from Solanum tuberosum (Potato).